Reading from the N-terminus, the 317-residue chain is 4-hydroxy-3-methylbut-2-enyl diphosphate reductase (317 aa).

Cys12 serves as a coordination point for [4Fe-4S] cluster. (2E)-4-hydroxy-3-methylbut-2-enyl diphosphate is bound by residues His41 and His74. Residues His41 and His74 each contribute to the dimethylallyl diphosphate site. Isopentenyl diphosphate contacts are provided by His41 and His74. Position 97 (Cys97) interacts with [4Fe-4S] cluster. Position 125 (His125) interacts with (2E)-4-hydroxy-3-methylbut-2-enyl diphosphate. Position 125 (His125) interacts with dimethylallyl diphosphate. His125 lines the isopentenyl diphosphate pocket. The active-site Proton donor is Glu127. Thr168 is a (2E)-4-hydroxy-3-methylbut-2-enyl diphosphate binding site. Cys198 is a binding site for [4Fe-4S] cluster. Residues Ser226, Ser227, Asn228, and Ser270 each coordinate (2E)-4-hydroxy-3-methylbut-2-enyl diphosphate. Dimethylallyl diphosphate contacts are provided by Ser226, Ser227, Asn228, and Ser270. Positions 226, 227, 228, and 270 each coordinate isopentenyl diphosphate.

Belongs to the IspH family. As to quaternary structure, homodimer. The cofactor is [4Fe-4S] cluster.

It carries out the reaction isopentenyl diphosphate + 2 oxidized [2Fe-2S]-[ferredoxin] + H2O = (2E)-4-hydroxy-3-methylbut-2-enyl diphosphate + 2 reduced [2Fe-2S]-[ferredoxin] + 2 H(+). The enzyme catalyses dimethylallyl diphosphate + 2 oxidized [2Fe-2S]-[ferredoxin] + H2O = (2E)-4-hydroxy-3-methylbut-2-enyl diphosphate + 2 reduced [2Fe-2S]-[ferredoxin] + 2 H(+). It participates in isoprenoid biosynthesis; dimethylallyl diphosphate biosynthesis; dimethylallyl diphosphate from (2E)-4-hydroxy-3-methylbutenyl diphosphate: step 1/1. Its pathway is isoprenoid biosynthesis; isopentenyl diphosphate biosynthesis via DXP pathway; isopentenyl diphosphate from 1-deoxy-D-xylulose 5-phosphate: step 6/6. In terms of biological role, catalyzes the conversion of 1-hydroxy-2-methyl-2-(E)-butenyl 4-diphosphate (HMBPP) into a mixture of isopentenyl diphosphate (IPP) and dimethylallyl diphosphate (DMAPP). Acts in the terminal step of the DOXP/MEP pathway for isoprenoid precursor biosynthesis. This chain is 4-hydroxy-3-methylbut-2-enyl diphosphate reductase, found in Yersinia pseudotuberculosis serotype O:1b (strain IP 31758).